Here is a 290-residue protein sequence, read N- to C-terminus: Small ribosomal subunit biogenesis GTPase RsgA (290 aa).

Positions 62–213 (KNSLVRPPIV…IADTPGFSSL (152 aa)) constitute a CP-type G domain. Residues 111–114 (SKMD) and 156–164 (GQTGVGKST) contribute to the GTP site. Zn(2+)-binding residues include cysteine 237, cysteine 242, histidine 244, and cysteine 250.

The protein belongs to the TRAFAC class YlqF/YawG GTPase family. RsgA subfamily. As to quaternary structure, monomer. Associates with 30S ribosomal subunit, binds 16S rRNA. Zn(2+) is required as a cofactor.

The protein resides in the cytoplasm. One of several proteins that assist in the late maturation steps of the functional core of the 30S ribosomal subunit. Helps release RbfA from mature subunits. May play a role in the assembly of ribosomal proteins into the subunit. Circularly permuted GTPase that catalyzes slow GTP hydrolysis, GTPase activity is stimulated by the 30S ribosomal subunit. In Streptococcus pyogenes serotype M6 (strain ATCC BAA-946 / MGAS10394), this protein is Small ribosomal subunit biogenesis GTPase RsgA.